The primary structure comprises 109 residues: Thioredoxin 1 (109 aa).

The 108-residue stretch at 2 to 109 (SDKIIHLTDD…LKEFLDANLA (108 aa)) folds into the Thioredoxin domain. Residues Cys33 and Cys36 each act as nucleophile in the active site. An intrachain disulfide couples Cys33 to Cys36. Lys70 is modified (N6-acetyllysine).

It belongs to the thioredoxin family. Monomer.

Its function is as follows. Participates in various redox reactions through the reversible oxidation of its active center dithiol to a disulfide and catalyzes dithiol-disulfide exchange reactions. This is Thioredoxin 1 (trxA) from Escherichia coli O157:H7.